Reading from the N-terminus, the 851-residue chain is DNA mismatch repair protein MutS (851 aa).

An ATP-binding site is contributed by 614–621; it reads GPNMGGKS.

Belongs to the DNA mismatch repair MutS family.

Its function is as follows. This protein is involved in the repair of mismatches in DNA. It is possible that it carries out the mismatch recognition step. This protein has a weak ATPase activity. The protein is DNA mismatch repair protein MutS of Serratia proteamaculans (strain 568).